Reading from the N-terminus, the 354-residue chain is Rhodopsin (354 aa).

Over 1–36 (MNGTEGENFYIPMSNKTGVVRSPFDYPQYYLAEPWK) the chain is Extracellular. N-linked (GlcNAc...) asparagine glycosylation is found at Asn2 and Asn15. A helical membrane pass occupies residues 37 to 61 (FSVLAAYMFFLIIAGFPVNFLTLYV). Residues 62-73 (TIQHKKLRQPLN) lie on the Cytoplasmic side of the membrane. The chain crosses the membrane as a helical span at residues 74-96 (YILLNLAVADLFMIFGGFPSTMI). The Extracellular segment spans residues 97-110 (TSMNGYFVFGPSGC). An intrachain disulfide couples Cys110 to Cys187. Residues 111-133 (NFEGFFATLGGEIGLWSLVVLAI) traverse the membrane as a helical segment. The short motif at 134 to 136 (ERY) is the 'Ionic lock' involved in activated form stabilization element. At 134–152 (ERYVVVCKPMSNFRFGSQH) the chain is on the cytoplasmic side. The helical transmembrane segment at 153 to 173 (AFMGVGLTWIMAMACAFPPLV) threads the bilayer. Over 174 to 202 (GWSRYIPEGMQCSCGIDYYTLKPEVNNES) the chain is Extracellular. A glycan (N-linked (GlcNAc...) asparagine) is linked at Asn200. The chain crosses the membrane as a helical span at residues 203–224 (FVIYMFVVHFSIPLTIIFFCYG). Over 225–252 (RLVCTVKEAAAQQQESETTQRAEREVTR) the chain is Cytoplasmic. Residues 253-274 (MVIIMVIAFLICWLPYASVAFF) traverse the membrane as a helical segment. Over 275-286 (IFCNQGSEFGPI) the chain is Extracellular. A helical membrane pass occupies residues 287–308 (FMTIPAFFAKAASLYNPLIYIL). N6-(retinylidene)lysine is present on Lys296. Residues 309–354 (MNKQFRNCMITTICCGKNPFEEEESTSASASKTEASSVSSSQVAPA) are Cytoplasmic-facing. S-palmitoyl cysteine attachment occurs at residues Cys322 and Cys323. The interval 333–354 (STSASASKTEASSVSSSQVAPA) is disordered. The span at 334-354 (TSASASKTEASSVSSSQVAPA) shows a compositional bias: low complexity.

This sequence belongs to the G-protein coupled receptor 1 family. Opsin subfamily. In terms of processing, phosphorylated on some or all of the serine and threonine residues present in the C-terminal region. Contains one covalently linked retinal chromophore.

Its subcellular location is the membrane. The protein resides in the cell projection. It localises to the cilium. The protein localises to the photoreceptor outer segment. Photoreceptor required for image-forming vision at low light intensity. While most salt water fish species use retinal as chromophore, most freshwater fish use 3-dehydroretinal, or a mixture of retinal and 3-dehydroretinal. Light-induced isomerization of 11-cis to all-trans retinal triggers a conformational change that activates signaling via G-proteins. Subsequent receptor phosphorylation mediates displacement of the bound G-protein alpha subunit by arrestin and terminates signaling. This Scyliorhinus canicula (Small-spotted catshark) protein is Rhodopsin (rho).